A 565-amino-acid polypeptide reads, in one-letter code: Proline--tRNA ligase (565 aa).

Belongs to the class-II aminoacyl-tRNA synthetase family. ProS type 1 subfamily. Homodimer.

Its subcellular location is the cytoplasm. The catalysed reaction is tRNA(Pro) + L-proline + ATP = L-prolyl-tRNA(Pro) + AMP + diphosphate. Catalyzes the attachment of proline to tRNA(Pro) in a two-step reaction: proline is first activated by ATP to form Pro-AMP and then transferred to the acceptor end of tRNA(Pro). As ProRS can inadvertently accommodate and process non-cognate amino acids such as alanine and cysteine, to avoid such errors it has two additional distinct editing activities against alanine. One activity is designated as 'pretransfer' editing and involves the tRNA(Pro)-independent hydrolysis of activated Ala-AMP. The other activity is designated 'posttransfer' editing and involves deacylation of mischarged Ala-tRNA(Pro). The misacylated Cys-tRNA(Pro) is not edited by ProRS. The sequence is that of Proline--tRNA ligase from Lactobacillus delbrueckii subsp. bulgaricus (strain ATCC BAA-365 / Lb-18).